A 387-amino-acid polypeptide reads, in one-letter code: Exodeoxyribonuclease 7 large subunit (387 aa).

It belongs to the XseA family. In terms of assembly, heterooligomer composed of large and small subunits.

It localises to the cytoplasm. It carries out the reaction Exonucleolytic cleavage in either 5'- to 3'- or 3'- to 5'-direction to yield nucleoside 5'-phosphates.. Its function is as follows. Bidirectionally degrades single-stranded DNA into large acid-insoluble oligonucleotides, which are then degraded further into small acid-soluble oligonucleotides. The polypeptide is Exodeoxyribonuclease 7 large subunit (Campylobacter jejuni subsp. doylei (strain ATCC BAA-1458 / RM4099 / 269.97)).